The primary structure comprises 613 residues: Portal protein (613 aa).

Residues 577–613 form a disordered region; sequence ATGGDHGIRQAPSARGDAEPDHAKSKPARDPPPGAGS. Over residues 592–605 the composition is skewed to basic and acidic residues; that stretch reads GDAEPDHAKSKPAR.

Belongs to the herpesviridae portal protein family. Homododecamerizes. Interacts with terminase subunits TRM1 and TRM3.

The protein localises to the virion. The protein resides in the host nucleus. In terms of biological role, forms a portal in the viral capsid through which viral DNA is translocated during DNA packaging. Assembles as a dodecamer at a single fivefold axe of the T=16 icosahedric capsid. Binds to the molecular motor that translocates the viral DNA, termed terminase. In Homo sapiens (Human), this protein is Portal protein.